The primary structure comprises 289 residues: MNLWVSIFLVSAIAGSCLPSGFAYVDVCNHEFEVFRSVIEQKCPRSLYPSPPIEVDGDLLDKLMDANHGNAYISILFYTSRCPFSRAVRPKFDVLSSMFPHITHLIVEQSQALPSVFSRYGIHSLPSILMVNQTMKMRYHGPKDLASLIQFYKETTGLKPVQYMDEGEPTSLDTDGNLITWLHNGSSIREIAEREPYMVLALMFLSLKLAILIFPIMGSRLKTLWALYVPHLSLGILGETSQLFGRALHMIDVRRLWIKLRLTKTRNFQERAKNALASVSLGKSSSQSA.

The signal sequence occupies residues Met1–Ala23. The Thioredoxin domain occupies Ser37–Gly157. 2 N-linked (GlcNAc...) asparagine glycosylation sites follow: Asn132 and Asn184. A helical membrane pass occupies residues Met198–Gly218.

Its subcellular location is the membrane. The chain is 5'-adenylylsulfate reductase-like 7 (APRL7) from Arabidopsis thaliana (Mouse-ear cress).